Here is a 544-residue protein sequence, read N- to C-terminus: Membrane protein insertase YidC (544 aa).

Transmembrane regions (helical) follow at residues 13–33 (LSLF…SWML), 321–341 (LWYL…DVIP), 343–363 (WGLS…PLTF), 409–429 (LGGC…YSLV), 461–481 (LYFV…FTQL), and 506–526 (MPIM…IYWI).

It belongs to the OXA1/ALB3/YidC family. Type 1 subfamily. Interacts with the Sec translocase complex via SecD. Specifically interacts with transmembrane segments of nascent integral membrane proteins during membrane integration.

The protein localises to the cell inner membrane. Its function is as follows. Required for the insertion and/or proper folding and/or complex formation of integral membrane proteins into the membrane. Involved in integration of membrane proteins that insert both dependently and independently of the Sec translocase complex, as well as at least some lipoproteins. Aids folding of multispanning membrane proteins. The sequence is that of Membrane protein insertase YidC from Borreliella afzelii (strain PKo) (Borrelia afzelii).